The sequence spans 1738 residues: Sodium leak channel NALCN (1738 aa).

Residues 1-36 (MLKRKQSSRVEAQPVTDFGPDESLSDNADILWINKP) are Cytoplasmic-facing. A helical transmembrane segment spans residues 37–57 (WVHSLLRICAIISVISVCMNT). At 58–65 (PMTFEHYP) the chain is on the extracellular side. The chain crosses the membrane as a helical span at residues 66–90 (PLQYVTFTLDTLLMFLYTAEMIAKM). Topologically, residues 91–106 (HIRGIVKGDSSYVKDR) are cytoplasmic. Residues 107–129 (WCVFDGFMVFCLWVSLVLQVFEI) traverse the membrane as a helical segment. The Extracellular segment spans residues 130–137 (ADIVDQMS). Residues 138–158 (PWGMLRIPRPLIMIRAFRIYF) traverse the membrane as a helical; Voltage-sensor segment. At 159-173 (RFELPRTRITNILKR) the chain is on the cytoplasmic side. The chain crosses the membrane as a helical span at residues 174-199 (SGEQIWSVSIFLLFFLLLYGILGVQM). Residues 200–269 (FGTFTYHCVV…YSGFNEIGTS (70 aa)) lie on the Extracellular side of the membrane. 2 disulfides stabilise this stretch: cysteine 207–cysteine 239 and cysteine 229–cysteine 245. Residues asparagine 210 and asparagine 216 are each glycosylated (N-linked (GlcNAc...) asparagine). The pore-forming intramembrane region spans 270–289 (IFTVYEAASQEGWVFLMYRA). Over 290–294 (IDSFP) the chain is Extracellular. The chain crosses the membrane as a helical span at residues 295 to 322 (RWRSYFYFITLIFFLAWLVKNVFIAVII). Residues 323–382 (ETFAEIRVQFQQMWGSRSSTTSTATTQMFHEDAAGGWQLVAVDVNKPQGRAPACLQKMMR) are Cytoplasmic-facing. A helical membrane pass occupies residues 383-403 (SSVFHMFILSMVTVDVIVAAS). The Extracellular segment spans residues 404–416 (NYYKGENFRRQYD). Residues 417–439 (EFYLAEVAFTVLFDLEALLKIWC) form a helical membrane-spanning segment. Residues 440 to 447 (LGFTGYIS) are Cytoplasmic-facing. Residues 448–468 (SSLHKFELLLVIGTTLHVYPD) traverse the membrane as a helical segment. Residues 469–472 (LYHS) lie on the Extracellular side of the membrane. The helical; Voltage-sensor transmembrane segment at 473 to 492 (QFTYFQVLRVVRLIKISPAL) threads the bilayer. At 493 to 502 (EDFVYKIFGP) the chain is on the cytoplasmic side. The chain crosses the membrane as a helical span at residues 503 to 530 (GKKLGSLVVFTASLLIVMSAISLQMFCF). Topologically, residues 531–543 (VEELDRFTTFPRA) are extracellular. An intramembrane region (pore-forming) is located at residues 544-563 (FMSMFQILTQEGWVDVMDQT). At 564–569 (LNAVGH) the chain is on the extracellular side. The chain crosses the membrane as a helical span at residues 570-599 (MWAPVVAIYFILYHLFATLILLSLFVAVIL). The Cytoplasmic segment spans residues 600–886 (DNLELDEDLK…QLYDLLGLVT (287 aa)). The segment at 762–785 (QERRSLRHGSNSQRISRGKSLETL) is disordered. The stretch at 795–830 (YRNAQREDSEIKMIQEKKEQAEMKRKVQEEELRENH) forms a coiled coil. Residues 887–906 (YLDWVMIIVTICSCISMMFE) form a helical membrane-spanning segment. Residues 907 to 915 (SPFRRVMHA) are Extracellular-facing. Residues 916–939 (PTLQIAEYVFVIFMSIELNLKIMA) form a helical membrane-spanning segment. Over 940-947 (DGLFFTPT) the chain is Cytoplasmic. A helical membrane pass occupies residues 948–972 (AVIRDFGGVMDIFIYLVSLIFLCWM). Residues 973 to 980 (PQNVPAES) are Extracellular-facing. The helical; Voltage-sensor transmembrane segment at 981 to 1003 (GAQLLMVLRCLRPLRIFKLVPQM) threads the bilayer. The Cytoplasmic segment spans residues 1004–1015 (RKVVRELFSGFK). The chain crosses the membrane as a helical span at residues 1016–1039 (EIFLVSILLLTLMLVFASFGVQLF). At 1040 to 1104 (AGKLAKCNDP…NFNFDNVGNA (65 aa)) the chain is on the extracellular side. Residues cysteine 1046 and cysteine 1057 are joined by a disulfide bond. N-linked (GlcNAc...) asparagine glycosylation occurs at asparagine 1064. Residues 1105-1124 (MLALFEVLSLKGWVEVRDVI) constitute an intramembrane region (pore-forming). The Extracellular segment spans residues 1125 to 1129 (IHRVG). The helical transmembrane segment at 1130-1159 (PIHGIYIHVFVFLGCMIGLTLFVGVVIANF) threads the bilayer. Topologically, residues 1160-1210 (NENKGTALLTVDQRRWEDLKSRLKIAQPLHLPPRPDNDGFRAKMYDITQHP) are cytoplasmic. A helical transmembrane segment spans residues 1211–1227 (FFKRTIALLVLAQSVLL). The Extracellular segment spans residues 1228–1236 (SVKWDVEDP). A helical transmembrane segment spans residues 1237–1260 (VTVPLATMSVVFTFIFVLEVTMKI). Residues 1261–1271 (IAMSPAGFWQS) lie on the Cytoplasmic side of the membrane. The chain crosses the membrane as a helical span at residues 1272-1293 (RRNRYDLLVTSLGVVWVVLHFA). Over 1294–1296 (LLN) the chain is Extracellular. Residues 1297 to 1318 (AYTYMMGACVIVFRFFSICGKH) traverse the membrane as a helical; Voltage-sensor segment. The Cytoplasmic segment spans residues 1319–1331 (VTLKMLLLTVVVS). A helical membrane pass occupies residues 1332-1357 (MYKSFFIIVGMFLLLLCYAFAGVVLF). The Extracellular portion of the chain corresponds to 1358 to 1378 (GTVKYGENINRHANFSSAGKA). The pore-forming intramembrane region spans 1379 to 1398 (ITVLFRIVTGEDWNKIMHDC). Over 1399–1420 (MVQPPFCTPDEFTYWATDCGNY) the chain is Extracellular. The cysteines at positions 1405 and 1417 are disulfide-linked. The chain crosses the membrane as a helical span at residues 1421–1447 (AGALMYFCSFYVIIAYIMLNLLVAIIV). Residues 1448–1738 (ENFSLFYSTE…DESGDDLLDI (291 aa)) lie on the Cytoplasmic side of the membrane. The interval 1611 to 1678 (PPSIETTQPS…QWRLPSAPKP (68 aa)) is disordered. The segment covering 1613 to 1632 (SIETTQPSEDTNANSQDNSM) has biased composition (polar residues). Residues 1633-1648 (QPETSSQQQLLSPTLS) show a composition bias toward low complexity.

This sequence belongs to the NALCN family. Found in a complex with NALCN, UNC79, UNC80 and NACL1; these auxiliary subunits are indispensable for the function of NALCN channel. Interacts with UNC80; required for the NALCN activation/inhibition by GPCRs in neurons. Found in a complex with NALCN, UNC79 and UNC80; UNC80 bridges NALCN to UNC79. Interacts with CHRM3. Phosphorylated on tyrosine residues.

It is found in the cell membrane. The catalysed reaction is Na(+)(in) = Na(+)(out). Its activity is regulated as follows. Inhibited by low micromolar concentrations of Gd(3+) and high micromolar concentrations of verapamil. Insensitive to tetrodotoxin (TTX) and potentiated by low external Ca(2+) concentration. Functionally, voltage-gated ion channel responsible for the resting Na(+) permeability that controls neuronal excitability. NALCN channel functions as a multi-protein complex, which consists at least of NALCN, NALF1, UNC79 and UNC80. NALCN is the voltage-sensing, pore-forming subunit of the NALCN channel complex. NALCN channel complex is constitutively active and conducts monovalent cations but is blocked by physiological concentrations of extracellular divalent cations. In addition to its role in regulating neuronal excitability, is required for normal respiratory rhythm, systemic osmoregulation by controlling the serum sodium concentration and in the regulation of the intestinal pace-making activity in the interstitial cells of Cajal. NALCN channel is also activated by neuropeptides such as neurotensin and substance P (SP) through a SRC family kinases-dependent pathway. In addition, NALCN activity is enhanced/modulated by several GPCRs, such as CHRM3. The chain is Sodium leak channel NALCN from Homo sapiens (Human).